Reading from the N-terminus, the 344-residue chain is Ribosomal RNA small subunit methyltransferase H 2 (344 aa).

Residues 78–80 (GGH), aspartate 98, phenylalanine 131, aspartate 145, and glutamine 152 each bind S-adenosyl-L-methionine.

Belongs to the methyltransferase superfamily. RsmH family.

The protein resides in the cytoplasm. It carries out the reaction cytidine(1402) in 16S rRNA + S-adenosyl-L-methionine = N(4)-methylcytidine(1402) in 16S rRNA + S-adenosyl-L-homocysteine + H(+). In terms of biological role, specifically methylates the N4 position of cytidine in position 1402 (C1402) of 16S rRNA. The protein is Ribosomal RNA small subunit methyltransferase H 2 of Acholeplasma laidlawii (strain PG-8A).